A 121-amino-acid polypeptide reads, in one-letter code: Large ribosomal subunit protein uL18 (121 aa).

It belongs to the universal ribosomal protein uL18 family. As to quaternary structure, part of the 50S ribosomal subunit; part of the 5S rRNA/L5/L18/L25 subcomplex. Contacts the 5S and 23S rRNAs.

Functionally, this is one of the proteins that bind and probably mediate the attachment of the 5S RNA into the large ribosomal subunit, where it forms part of the central protuberance. The polypeptide is Large ribosomal subunit protein uL18 (Acidovorax ebreus (strain TPSY) (Diaphorobacter sp. (strain TPSY))).